The following is a 49-amino-acid chain: Large ribosomal subunit protein bL33 (49 aa).

It belongs to the bacterial ribosomal protein bL33 family.

The polypeptide is Large ribosomal subunit protein bL33 (Leuconostoc citreum (strain KM20)).